Here is a 282-residue protein sequence, read N- to C-terminus: Heat stress transcription factor A-6a (282 aa).

Residues 17–111 (PTAFLTKTYN…LLKNIKRRKT (95 aa)) mediate DNA binding. Residues 111-177 (TSSQTQTQSL…MMMNFLLKKI (67 aa)) are hydrophobic repeat HR-A/B. Residues 175-190 (KKIKKPSFLQSLRKRN) carry the Bipartite nuclear localization signal motif. The AHA signature appears at 261 to 270 (EGIWKGFVLS).

This sequence belongs to the HSF family. Class A subfamily. Homotrimer. Exhibits temperature-dependent phosphorylation.

It localises to the nucleus. In terms of biological role, transcriptional activator that specifically binds DNA sequence 5'-AGAAnnTTCT-3' known as heat shock promoter elements (HSE). This is Heat stress transcription factor A-6a (HSFA6A) from Arabidopsis thaliana (Mouse-ear cress).